The primary structure comprises 319 residues: Transaldolase (319 aa).

Lysine 125 (schiff-base intermediate with substrate) is an active-site residue.

The protein belongs to the transaldolase family. Type 1 subfamily. Homodimer.

The protein localises to the cytoplasm. It catalyses the reaction D-sedoheptulose 7-phosphate + D-glyceraldehyde 3-phosphate = D-erythrose 4-phosphate + beta-D-fructose 6-phosphate. The protein operates within carbohydrate degradation; pentose phosphate pathway; D-glyceraldehyde 3-phosphate and beta-D-fructose 6-phosphate from D-ribose 5-phosphate and D-xylulose 5-phosphate (non-oxidative stage): step 2/3. In terms of biological role, transaldolase is important for the balance of metabolites in the pentose-phosphate pathway. The chain is Transaldolase from Ralstonia nicotianae (strain ATCC BAA-1114 / GMI1000) (Ralstonia solanacearum).